The sequence spans 194 residues: Fe/S biogenesis protein NfuA (194 aa).

Residues cysteine 151 and cysteine 154 each coordinate [4Fe-4S] cluster.

This sequence belongs to the NfuA family. Homodimer. [4Fe-4S] cluster is required as a cofactor.

In terms of biological role, involved in iron-sulfur cluster biogenesis. Binds a 4Fe-4S cluster, can transfer this cluster to apoproteins, and thereby intervenes in the maturation of Fe/S proteins. Could also act as a scaffold/chaperone for damaged Fe/S proteins. The chain is Fe/S biogenesis protein NfuA from Aliivibrio salmonicida (strain LFI1238) (Vibrio salmonicida (strain LFI1238)).